Consider the following 179-residue polypeptide: Bifunctional protein PyrR (179 aa).

The PRPP-binding motif lies at 100-112 (VILVDDVLFTGRT).

The protein belongs to the purine/pyrimidine phosphoribosyltransferase family. PyrR subfamily. In terms of assembly, homodimer and homohexamer; in equilibrium.

It catalyses the reaction UMP + diphosphate = 5-phospho-alpha-D-ribose 1-diphosphate + uracil. Its function is as follows. Regulates transcriptional attenuation of the pyrimidine nucleotide (pyr) operon by binding in a uridine-dependent manner to specific sites on pyr mRNA. This disrupts an antiterminator hairpin in the RNA and favors formation of a downstream transcription terminator, leading to a reduced expression of downstream genes. In terms of biological role, also displays a weak uracil phosphoribosyltransferase activity which is not physiologically significant. The chain is Bifunctional protein PyrR from Geobacillus sp. (strain WCH70).